The following is a 1503-amino-acid chain: E3 ubiquitin-protein ligase listerin (1503 aa).

14 HEAT repeats span residues 52 to 89 (SGIDDETRIVMRKLTKKDCQTREKGLRELTNIIAETSS), 93 to 129 (CYEHFCGLVPQLSTDGSPTVRLLTMKTITLFLVKLEK), 133 to 170 (KGLKKIIPMVLFARCDVTNGVAAAAGAVIRDGFEADKK), 280 to 318 (LNTPSIVTYIQNHLDSQTFTPECSTAWEGMIILLPSAQF), 323 to 345 (SLQNGIYPRFLNVIRKKGNHWRV), 346 to 384 (LQHFLLPAVVLLLKEMGSLENNMKVLGTIMESFTDNLPW), 552 to 589 (GDIVRLIKLLLENQEIKSLNISVKNDHVGRRLLLTGGS), 640 to 663 (AENVEFLITLLRKMKSTDVSNEAE), 664 to 700 (KNVLILKLFTAIFESDEDAKSEHYNCLSEHLTSDFNS), 845 to 882 (LEKRYSLVALTEELQRSRREIEERLIRSDEVRFKLDDS), 1022 to 1065 (TLFI…RMFR), 1078 to 1117 (RTLLKAMFTLVEFPTNVPNDSVVTREFVPELSVFKYSLLE), 1141 to 1183 (AAAK…VMIS), and 1302 to 1340 (FKSITLLPAAVRLFHKNIPNNFKPIFQEVVTKHASKLLI). The RING-type zinc-finger motif lies at 1446 to 1499 (CTICMMTVHQQTNQLPKVKCKQCKNRFHSNCLVSSFHTYKWFESSNQSTCPLCR).

This sequence belongs to the LTN1 family. Component of the ribosome quality control complex (RQC), composed of at least the E3 ubiquitin ligase ltn1 and nemf. The complex probably also contains tcf25 as well as vcp/p97 and its ubiquitin-binding cofactors. RQC forms a stable complex with 60S ribosomal subunits.

It localises to the cytoplasm. The protein resides in the cytosol. The catalysed reaction is S-ubiquitinyl-[E2 ubiquitin-conjugating enzyme]-L-cysteine + [acceptor protein]-L-lysine = [E2 ubiquitin-conjugating enzyme]-L-cysteine + N(6)-ubiquitinyl-[acceptor protein]-L-lysine.. The protein operates within protein modification; protein ubiquitination. In terms of biological role, E3 ubiquitin-protein ligase. Component of the ribosome quality control complex (RQC), a ribosome-associated complex that mediates ubiquitination and extraction of incompletely synthesized nascent chains for proteasomal degradation. Ubiquitination leads to vcp/p97 recruitment for extraction and degradation of the incomplete translation product. The sequence is that of E3 ubiquitin-protein ligase listerin from Caenorhabditis briggsae.